Consider the following 548-residue polypeptide: Eukaryotic translation initiation factor 3 subunit D (548 aa).

Position 53 is an N6-acetyllysine (Lys-53). Ser-161 carries the post-translational modification Phosphoserine. The interval 285–299 is RNA gate; the sequence is DFDLPTVSETANEPP. 2 disordered regions span residues 288–309 and 523–548; these read LPTV…FNSP and PDGT…EEET. The span at 291 to 309 shows a compositional bias: polar residues; it reads VSETANEPPQDEGNSFNSP. Residues Ser-528 and Ser-529 each carry the phosphoserine modification. Residues 529 to 548 show a composition bias toward acidic residues; it reads SDEDEEEEEEEEEEEEEEET.

Belongs to the eIF-3 subunit D family. In terms of assembly, component of the eukaryotic translation initiation factor 3 (eIF-3) complex, which is composed of 13 subunits: EIF3A, EIF3B, EIF3C, EIF3D, EIF3E, EIF3F, EIF3G, EIF3H, EIF3I, EIF3J, EIF3K, EIF3L and EIF3M. The eIF-3 complex appears to include 3 stable modules: module A is composed of EIF3A, EIF3B, EIF3G and EIF3I; module B is composed of EIF3F, EIF3H, and EIF3M; and module C is composed of EIF3C, EIF3D, EIF3E, EIF3K and EIF3L. EIF3C of module C binds EIF3B of module A and EIF3H of module B, thereby linking the three modules. EIF3J is a labile subunit that binds to the eIF-3 complex via EIF3B. The eIF-3 complex interacts with RPS6KB1 under conditions of nutrient depletion. Mitogenic stimulation leads to binding and activation of a complex composed of MTOR and RPTOR, leading to phosphorylation and release of RPS6KB1 and binding of EIF4B to eIF-3.

It is found in the cytoplasm. Functionally, mRNA cap-binding component of the eukaryotic translation initiation factor 3 (eIF-3) complex, a complex required for several steps in the initiation of protein synthesis of a specialized repertoire of mRNAs. The eIF-3 complex associates with the 40S ribosome and facilitates the recruitment of eIF-1, eIF-1A, eIF-2:GTP:methionyl-tRNAi and eIF-5 to form the 43S pre-initiation complex (43S PIC). The eIF-3 complex stimulates mRNA recruitment to the 43S PIC and scanning of the mRNA for AUG recognition. The eIF-3 complex is also required for disassembly and recycling of post-termination ribosomal complexes and subsequently prevents premature joining of the 40S and 60S ribosomal subunits prior to initiation. The eIF-3 complex specifically targets and initiates translation of a subset of mRNAs involved in cell proliferation, including cell cycling, differentiation and apoptosis, and uses different modes of RNA stem-loop binding to exert either translational activation or repression. In the eIF-3 complex, EIF3D specifically recognizes and binds the 7-methylguanosine cap of a subset of mRNAs. The sequence is that of Eukaryotic translation initiation factor 3 subunit D from Pongo abelii (Sumatran orangutan).